Here is a 346-residue protein sequence, read N- to C-terminus: Phosphoribosylformylglycinamidine cyclo-ligase (346 aa).

It belongs to the AIR synthase family.

Its subcellular location is the cytoplasm. It catalyses the reaction 2-formamido-N(1)-(5-O-phospho-beta-D-ribosyl)acetamidine + ATP = 5-amino-1-(5-phospho-beta-D-ribosyl)imidazole + ADP + phosphate + H(+). It functions in the pathway purine metabolism; IMP biosynthesis via de novo pathway; 5-amino-1-(5-phospho-D-ribosyl)imidazole from N(2)-formyl-N(1)-(5-phospho-D-ribosyl)glycinamide: step 2/2. The protein is Phosphoribosylformylglycinamidine cyclo-ligase of Vibrio atlanticus (strain LGP32) (Vibrio splendidus (strain Mel32)).